Consider the following 765-residue polypeptide: Ubiquitin-like modifier-activating enzyme atg7 (765 aa).

A GXGXXG motif motif is present at residues Gly-436 to Gly-441. Catalysis depends on Cys-616, which acts as the Glycyl thioester intermediate. Disordered stretches follow at residues Ala-646–His-670 and Ala-744–Leu-765. Residues Ala-721 to Glu-760 are homodimerization. Residues Val-748–Leu-765 are compositionally biased toward acidic residues.

The protein belongs to the ATG7 family. In terms of assembly, homodimer. Interacts with ATG8 through a thioester bond between Cys-616 and the C-terminal Gly of ATG8 and with ATG12 through a thioester bond between Cys-616 and the C-terminal Gly of ATG12. Also interacts with ATG3.

The protein resides in the cytoplasm. It localises to the preautophagosomal structure. In terms of biological role, E1-like activating enzyme involved in the 2 ubiquitin-like systems required for cytoplasm to vacuole transport (Cvt) and autophagy. Activates ATG12 for its conjugation with ATG5 and ATG8 for its conjugation with phosphatidylethanolamine. Both systems are needed for the ATG8 association to Cvt vesicles and autophagosomes membranes. Autophagy is essential for maintenance of amino acid levels and protein synthesis under nitrogen starvation. Required for selective autophagic degradation of the nucleus (nucleophagy) as well as for mitophagy which contributes to regulate mitochondrial quantity and quality by eliminating the mitochondria to a basal level to fulfill cellular energy requirements and preventing excess ROS production. Required for normal mycelial growth and conidiogenesis, and regulates sclerotial formation. Plays an essential role in pathogenesis. This chain is Ubiquitin-like modifier-activating enzyme atg7, found in Botryotinia fuckeliana (strain BcDW1) (Noble rot fungus).